We begin with the raw amino-acid sequence, 404 residues long: NADH-quinone oxidoreductase subunit D 2 (404 aa).

It belongs to the complex I 49 kDa subunit family. In terms of assembly, NDH-1 is composed of 14 different subunits. Subunits NuoB, C, D, E, F, and G constitute the peripheral sector of the complex.

The protein localises to the cell inner membrane. The catalysed reaction is a quinone + NADH + 5 H(+)(in) = a quinol + NAD(+) + 4 H(+)(out). NDH-1 shuttles electrons from NADH, via FMN and iron-sulfur (Fe-S) centers, to quinones in the respiratory chain. The immediate electron acceptor for the enzyme in this species is believed to be ubiquinone. Couples the redox reaction to proton translocation (for every two electrons transferred, four hydrogen ions are translocated across the cytoplasmic membrane), and thus conserves the redox energy in a proton gradient. In Rhizobium etli (strain ATCC 51251 / DSM 11541 / JCM 21823 / NBRC 15573 / CFN 42), this protein is NADH-quinone oxidoreductase subunit D 2.